A 186-amino-acid chain; its full sequence is Temperature-induced lipocalin-1 (186 aa).

The HPR (Hydrophobic proline-rich) motif lies at 90–97 (PPFLPIIP). The interval 154–174 (KLHKTPQSDTPPESNTAPEDS) is disordered. The span at 158–171 (TPQSDTPPESNTAP) shows a compositional bias: polar residues.

The protein belongs to the calycin superfamily. Lipocalin family. In terms of tissue distribution, expressed ubiquitously at similar levels, except in dry seeds (at protein level). Present in seeds.

The protein localises to the cell membrane. Its subcellular location is the cytoplasm. It is found in the plastid. It localises to the chloroplast membrane. Functionally, involved in basal (BT) and acquired thermotolerance (AT), probably by preventing plasma membrane lipids peroxidation induced by severe heat-shock (HS). Lipocalin that confers protection against oxidative stress caused by heat, freezing, paraquat and light. Confers resistance to high salt (NaCl) levels, probably by protecting chloroplasts from ion toxicity via ion homeostasis maintenance. Required for seed longevity by ensuring polyunsaturated lipids integrity. This chain is Temperature-induced lipocalin-1, found in Arabidopsis thaliana (Mouse-ear cress).